The primary structure comprises 326 residues: Vomeronasal type-1 receptor 100 (326 aa).

At 1–32 (MSEFPFFSPQPLFSYMMNKNSRVHTDSNIRNT) the chain is on the extracellular side. The helical transmembrane segment at 33 to 53 (FFTEIGIGILANSFLLLFHIF) threads the bilayer. At 54 to 70 (KFIRGQRSRLTDLPIGL) the chain is on the cytoplasmic side. The chain crosses the membrane as a helical span at residues 71–91 (LSLIHLLMLLMGAFIAIDIFI). The Extracellular segment spans residues 92-104 (SWRGWDDIICKFL). An intrachain disulfide couples Cys101 to Cys188. Residues 105-127 (VYLYRSFRGLSLCTTCMLSVLQA) traverse the membrane as a helical segment. Topologically, residues 128–149 (ITLSPRSSCLAKFKHKSPHHVS) are cytoplasmic. The chain crosses the membrane as a helical span at residues 150 to 170 (CAIISLSILYMFISSHLLVSI). Topologically, residues 171-209 (NATPNLTTNNFMQVTQSCYIIPLSYLMQSMFSTLLAIRD) are extracellular. Asn175 carries an N-linked (GlcNAc...) asparagine glycan. Residues 210–230 (ISLISLMVLSTCYMVVLLCRH) traverse the membrane as a helical segment. Over 231–254 (RNQIQHLQGTNLSPKASPEQRATQ) the chain is Cytoplasmic. The helical transmembrane segment at 255–275 (TILMLMTFFVLMSIFDSIVSC) threads the bilayer. Topologically, residues 276 to 285 (SRTMYLNDPT) are extracellular. The chain crosses the membrane as a helical span at residues 286–306 (SYYIQIFVVYIYATVSPFVFM). Residues 307 to 326 (STEKHIVNFLKSMCVRVKNV) are Cytoplasmic-facing.

This sequence belongs to the G-protein coupled receptor 1 family. Expressed in 1-4% of neurons of the vomeronasal organ. Only one pheromone receptor gene may be expressed in a particular neuron. Not expressed in the main olfactory epithelium.

Its subcellular location is the cell membrane. In terms of biological role, putative pheromone receptor implicated in the regulation of social as well as reproductive behavior. In Rattus norvegicus (Rat), this protein is Vomeronasal type-1 receptor 100 (Vom1r100).